A 1080-amino-acid polypeptide reads, in one-letter code: Carbamoyl phosphate synthase large chain (1080 aa).

Residues 1–403 (MPKRTDLRTI…SLQKAVRGLE (403 aa)) are carboxyphosphate synthetic domain. 12 residues coordinate ATP: arginine 129, arginine 169, glycine 175, glycine 176, glutamate 208, valine 210, glutamate 215, glycine 241, valine 242, histidine 243, glutamine 285, and glutamate 299. The region spanning 133–328 (RVAMQEIGLE…IAKIAAKLAV (196 aa)) is the ATP-grasp 1 domain. 3 residues coordinate Mg(2+): glutamine 285, glutamate 299, and asparagine 301. Positions 285, 299, and 301 each coordinate Mn(2+). The tract at residues 404–554 (TGKVGLEPTG…YSTYEEECEA (151 aa)) is oligomerization domain. A carbamoyl phosphate synthetic domain region spans residues 555-942 (APSDRRKIMI…AFARAQEAGD (388 aa)). The 198-residue stretch at 679-876 (QRLVQQLGLR…LAKIAARCMT (198 aa)) folds into the ATP-grasp 2 domain. ATP contacts are provided by arginine 715, arginine 754, leucine 756, glutamate 761, glycine 787, valine 788, histidine 789, serine 790, glutamine 830, and glutamate 847. Residues glutamine 830, glutamate 847, and asparagine 849 each contribute to the Mg(2+) site. Mn(2+) contacts are provided by glutamine 830, glutamate 847, and asparagine 849. The MGS-like domain occupies 943 to 1080 (IRAPQPGRAF…LQELHKELQV (138 aa)). Residues 943 to 1080 (IRAPQPGRAF…LQELHKELQV (138 aa)) are allosteric domain.

Belongs to the CarB family. Composed of two chains; the small (or glutamine) chain promotes the hydrolysis of glutamine to ammonia, which is used by the large (or ammonia) chain to synthesize carbamoyl phosphate. Tetramer of heterodimers (alpha,beta)4. Mg(2+) serves as cofactor. It depends on Mn(2+) as a cofactor.

It catalyses the reaction hydrogencarbonate + L-glutamine + 2 ATP + H2O = carbamoyl phosphate + L-glutamate + 2 ADP + phosphate + 2 H(+). The catalysed reaction is hydrogencarbonate + NH4(+) + 2 ATP = carbamoyl phosphate + 2 ADP + phosphate + 2 H(+). It functions in the pathway amino-acid biosynthesis; L-arginine biosynthesis; carbamoyl phosphate from bicarbonate: step 1/1. The protein operates within pyrimidine metabolism; UMP biosynthesis via de novo pathway; (S)-dihydroorotate from bicarbonate: step 1/3. Functionally, large subunit of the glutamine-dependent carbamoyl phosphate synthetase (CPSase). CPSase catalyzes the formation of carbamoyl phosphate from the ammonia moiety of glutamine, carbonate, and phosphate donated by ATP, constituting the first step of 2 biosynthetic pathways, one leading to arginine and/or urea and the other to pyrimidine nucleotides. The large subunit (synthetase) binds the substrates ammonia (free or transferred from glutamine from the small subunit), hydrogencarbonate and ATP and carries out an ATP-coupled ligase reaction, activating hydrogencarbonate by forming carboxy phosphate which reacts with ammonia to form carbamoyl phosphate. The sequence is that of Carbamoyl phosphate synthase large chain from Xylella fastidiosa (strain Temecula1 / ATCC 700964).